Here is a 262-residue protein sequence, read N- to C-terminus: Acyl-[acyl-carrier-protein]--UDP-N-acetylglucosamine O-acyltransferase (262 aa).

The protein belongs to the transferase hexapeptide repeat family. LpxA subfamily. As to quaternary structure, homotrimer.

Its subcellular location is the cytoplasm. The enzyme catalyses a (3R)-hydroxyacyl-[ACP] + UDP-N-acetyl-alpha-D-glucosamine = a UDP-3-O-[(3R)-3-hydroxyacyl]-N-acetyl-alpha-D-glucosamine + holo-[ACP]. Its pathway is glycolipid biosynthesis; lipid IV(A) biosynthesis; lipid IV(A) from (3R)-3-hydroxytetradecanoyl-[acyl-carrier-protein] and UDP-N-acetyl-alpha-D-glucosamine: step 1/6. Functionally, involved in the biosynthesis of lipid A, a phosphorylated glycolipid that anchors the lipopolysaccharide to the outer membrane of the cell. This is Acyl-[acyl-carrier-protein]--UDP-N-acetylglucosamine O-acyltransferase from Histophilus somni (strain 129Pt) (Haemophilus somnus).